The chain runs to 331 residues: tRNA N6-adenosine threonylcarbamoyltransferase (331 aa).

Positions 107 and 111 each coordinate Fe cation. Substrate contacts are provided by residues 129–133 (LVSGG), D162, G175, and N269. D297 is a binding site for Fe cation.

Belongs to the KAE1 / TsaD family. Fe(2+) is required as a cofactor.

It is found in the cytoplasm. It carries out the reaction L-threonylcarbamoyladenylate + adenosine(37) in tRNA = N(6)-L-threonylcarbamoyladenosine(37) in tRNA + AMP + H(+). Functionally, required for the formation of a threonylcarbamoyl group on adenosine at position 37 (t(6)A37) in tRNAs that read codons beginning with adenine. Is involved in the transfer of the threonylcarbamoyl moiety of threonylcarbamoyl-AMP (TC-AMP) to the N6 group of A37, together with TsaE and TsaB. TsaD likely plays a direct catalytic role in this reaction. The chain is tRNA N6-adenosine threonylcarbamoyltransferase from Wolinella succinogenes (strain ATCC 29543 / DSM 1740 / CCUG 13145 / JCM 31913 / LMG 7466 / NCTC 11488 / FDC 602W) (Vibrio succinogenes).